A 171-amino-acid polypeptide reads, in one-letter code: Lipoprotein signal peptidase (171 aa).

The next 3 membrane-spanning stretches (helical) occupy residues 8-28 (SFLW…YIVV), 64-84 (WQQY…VYFL), and 96-118 (SAYA…NGFV). Active-site residues include D120 and D138. Residues 133–153 (VFNIADIAICIGAGLLALDAF) form a helical membrane-spanning segment.

It belongs to the peptidase A8 family.

It localises to the cell inner membrane. It catalyses the reaction Release of signal peptides from bacterial membrane prolipoproteins. Hydrolyzes -Xaa-Yaa-Zaa-|-(S,diacylglyceryl)Cys-, in which Xaa is hydrophobic (preferably Leu), and Yaa (Ala or Ser) and Zaa (Gly or Ala) have small, neutral side chains.. It participates in protein modification; lipoprotein biosynthesis (signal peptide cleavage). In terms of biological role, this protein specifically catalyzes the removal of signal peptides from prolipoproteins. This is Lipoprotein signal peptidase from Haemophilus influenzae (strain 86-028NP).